Reading from the N-terminus, the 65-residue chain is Gallinacin-1 alpha (65 aa).

The signal sequence occupies residues 1–19 (MRIVYLLLPFILLLAQGAA). The propeptide occupies 20-25 (GSSQAL). Intrachain disulfides connect C31–C59, C38–C53, and C43–C60.

The protein belongs to the beta-defensin family.

It is found in the secreted. The protein localises to the cytoplasmic granule. Its function is as follows. Has bactericidal activity. Potent activity against E.coli ML-35, L.monocytogenes EGD and C.albicans. The protein is Gallinacin-1 alpha of Gallus gallus (Chicken).